The primary structure comprises 223 residues: UPF0441 protein YgiB (223 aa).

The span at 178–195 (TVPKTAMAPKPATTTTVT) shows a compositional bias: low complexity. The disordered stretch occupies residues 178–223 (TVPKTAMAPKPATTTTVTRGGFGESVAKQSTLQRSATGTSSRSMGG). Residues 204–223 (AKQSTLQRSATGTSSRSMGG) are compositionally biased toward polar residues.

The protein belongs to the UPF0441 family.

In Escherichia coli (strain ATCC 8739 / DSM 1576 / NBRC 3972 / NCIMB 8545 / WDCM 00012 / Crooks), this protein is UPF0441 protein YgiB.